The primary structure comprises 47 residues: Large ribosomal subunit protein bL34 (47 aa).

Belongs to the bacterial ribosomal protein bL34 family.

The sequence is that of Large ribosomal subunit protein bL34 from Rhodococcus opacus (strain B4).